A 176-amino-acid polypeptide reads, in one-letter code: Disulfide bond formation protein B (176 aa).

Over 1 to 13 (MQFLNTFSKSRIS) the chain is Cytoplasmic. A helical transmembrane segment spans residues 14–30 (WLLLLLCIVFFEGSALF). Residues 31–48 (FQHGMKLGPCVMCIYERV) lie on the Periplasmic side of the membrane. A disulfide bond links cysteine 40 and cysteine 43. A helical membrane pass occupies residues 49–64 (AMMGIAFAALLGAIAP). Residues 65 to 71 (QYAIIRW) lie on the Cytoplasmic side of the membrane. A helical transmembrane segment spans residues 72–89 (AGLIAWGYSAVRGLQLSI). At 90–144 (EHVGYQFNPSPFATCDLFVQFPNWAPLNKWVPWMFEAYGNCAEVVWTFLGQSMPQ) the chain is on the periplasmic side. A disulfide bond links cysteine 104 and cysteine 130. The helical transmembrane segment at 145-163 (WLVIIFAGNLVALALIVIA) threads the bilayer. At 164–176 (QFFSKKTNTILDM) the chain is on the cytoplasmic side.

Belongs to the DsbB family.

The protein localises to the cell inner membrane. Functionally, required for disulfide bond formation in some periplasmic proteins. Acts by oxidizing the DsbA protein. The chain is Disulfide bond formation protein B from Photobacterium profundum (strain SS9).